The sequence spans 611 residues: Nuclear cap-binding protein subunit 3 (611 aa).

The tract at residues 1 to 44 (MAAVRGLRVSVKAGGGAEPEPMEVEEGEVEAAADRASPREVVSG) is disordered. Acidic residues predominate over residues 20 to 31 (EPMEVEEGEVEA). The tract at residues 108–169 (ETLYVYGVDD…LSSMPTNEKG (62 aa)) is RNA recognition motif (RRM) domain. The short motif at 137 to 140 (WLDD) is the WLDD motif; essential for 7-methylguanosine-containing mRNA cap binding element. Disordered stretches follow at residues 159-230 (NLSS…PDTL), 338-360 (EEPIEEEEEEEEEEEDMDEDDRV), 373-393 (REREGARRSAASNSDSDEMDY), 423-568 (KTIR…DSVL), and 583-611 (RQKKSRLDNLPSLQIEISRESSSGSDTDS). Residues 168–179 (KGQRKKDGEHSS) are compositionally biased toward basic and acidic residues. Composition is skewed to acidic residues over residues 196 to 218 (DETEEGEVEEDNPSEAEDEDETE) and 339 to 358 (EPIEEEEEEEEEEEDMDEDD). The span at 423–439 (KTIRNSMRSDSVGNSVK) shows a compositional bias: polar residues. Basic and acidic residues predominate over residues 446 to 463 (SHAEKPADVRLILEEKRQ). Residues 464 to 475 (STASRQQSSSGK) show a composition bias toward low complexity. Basic and acidic residues-rich tracts occupy residues 501–511 (SRREPLSDVHS) and 544–556 (PKDKERPSEKSEK). The span at 602 to 611 (ESSSGSDTDS) shows a compositional bias: low complexity.

It belongs to the NCBP3 family. As to quaternary structure, component of an alternative cap-binding complex (CBC) composed of NCBP1/CBP80 and NCBP3.

It localises to the nucleus. The protein localises to the cytoplasm. Functionally, associates with NCBP1/CBP80 to form an alternative cap-binding complex (CBC) which plays a key role in mRNA export. NCBP3 serves as adapter protein linking the capped RNAs (m7GpppG-capped RNA) to NCBP1/CBP80. Unlike the conventional CBC with NCBP2 which binds both small nuclear RNA (snRNA) and messenger (mRNA) and is involved in their export from the nucleus, the alternative CBC with NCBP3 does not bind snRNA and associates only with mRNA thereby playing a role in only mRNA export. This is Nuclear cap-binding protein subunit 3 from Xenopus tropicalis (Western clawed frog).